A 342-amino-acid chain; its full sequence is NADH-ubiquinone oxidoreductase chain 2 (342 aa).

The next 9 helical transmembrane spans lie at threonine 25–leucine 45, isoleucine 58–isoleucine 78, methionine 94–proline 114, methionine 146–leucine 166, isoleucine 174–glutamate 194, asparagine 195–phenylalanine 215, phenylalanine 238–proline 258, leucine 274–phenylalanine 294, and valine 316–phenylalanine 336.

The protein belongs to the complex I subunit 2 family.

Its subcellular location is the mitochondrion inner membrane. It carries out the reaction a ubiquinone + NADH + 5 H(+)(in) = a ubiquinol + NAD(+) + 4 H(+)(out). Its function is as follows. Core subunit of the mitochondrial membrane respiratory chain NADH dehydrogenase (Complex I) that is believed to belong to the minimal assembly required for catalysis. Complex I functions in the transfer of electrons from NADH to the respiratory chain. The immediate electron acceptor for the enzyme is believed to be ubiquinone. This chain is NADH-ubiquinone oxidoreductase chain 2 (ND2), found in Locusta migratoria (Migratory locust).